A 183-amino-acid polypeptide reads, in one-letter code: Large ribosomal subunit protein bL25 (183 aa).

This sequence belongs to the bacterial ribosomal protein bL25 family. CTC subfamily. In terms of assembly, part of the 50S ribosomal subunit; part of the 5S rRNA/L5/L18/L25 subcomplex. Contacts the 5S rRNA. Binds to the 5S rRNA independently of L5 and L18.

Its function is as follows. This is one of the proteins that binds to the 5S RNA in the ribosome where it forms part of the central protuberance. In Desulfotalea psychrophila (strain LSv54 / DSM 12343), this protein is Large ribosomal subunit protein bL25.